The primary structure comprises 507 residues: Putative thymidine phosphorylase (507 aa).

It belongs to the thymidine/pyrimidine-nucleoside phosphorylase family. Type 2 subfamily.

It carries out the reaction thymidine + phosphate = 2-deoxy-alpha-D-ribose 1-phosphate + thymine. The protein is Putative thymidine phosphorylase of Ralstonia nicotianae (strain ATCC BAA-1114 / GMI1000) (Ralstonia solanacearum).